Here is a 232-residue protein sequence, read N- to C-terminus: MSVVNSIRAQIPPIHREGYPFIGAFALATLVLFLIWAPLGWIGTVLTIWCLLFFRDPVRVTPVREGLVVAPADGRVSMVVQIIPPPALGLGDKPLPRVSIFMSVFNCHVNRSPVAGRVERIIYSPGKFINAELDKASEDNERNSLVISTPAGQIGVVQIAGLVARRIVAFVREGQPLAAGERFGLIRFGSRLDVYLPEGAKPLVSEGQTAIAGETVLADFSLGDGGRTYRAD.

Catalysis depends on Ser190, which acts as the Schiff-base intermediate with substrate; via pyruvic acid. Residue Ser190 is modified to Pyruvic acid (Ser); by autocatalysis.

This sequence belongs to the phosphatidylserine decarboxylase family. PSD-A subfamily. Heterodimer of a large membrane-associated beta subunit and a small pyruvoyl-containing alpha subunit. Pyruvate is required as a cofactor. Is synthesized initially as an inactive proenzyme. Formation of the active enzyme involves a self-maturation process in which the active site pyruvoyl group is generated from an internal serine residue via an autocatalytic post-translational modification. Two non-identical subunits are generated from the proenzyme in this reaction, and the pyruvate is formed at the N-terminus of the alpha chain, which is derived from the carboxyl end of the proenzyme. The post-translation cleavage follows an unusual pathway, termed non-hydrolytic serinolysis, in which the side chain hydroxyl group of the serine supplies its oxygen atom to form the C-terminus of the beta chain, while the remainder of the serine residue undergoes an oxidative deamination to produce ammonia and the pyruvoyl prosthetic group on the alpha chain.

Its subcellular location is the cell membrane. It catalyses the reaction a 1,2-diacyl-sn-glycero-3-phospho-L-serine + H(+) = a 1,2-diacyl-sn-glycero-3-phosphoethanolamine + CO2. It functions in the pathway phospholipid metabolism; phosphatidylethanolamine biosynthesis; phosphatidylethanolamine from CDP-diacylglycerol: step 2/2. Its function is as follows. Catalyzes the formation of phosphatidylethanolamine (PtdEtn) from phosphatidylserine (PtdSer). The protein is Phosphatidylserine decarboxylase proenzyme of Rhodopseudomonas palustris (strain HaA2).